The primary structure comprises 98 residues: NADH-ubiquinone oxidoreductase chain 4L (98 aa).

3 helical membrane-spanning segments follow: residues Met-1–Met-21, Ala-29–Leu-49, and Ile-61–Ile-81.

The protein belongs to the complex I subunit 4L family. In terms of assembly, core subunit of respiratory chain NADH dehydrogenase (Complex I) which is composed of 45 different subunits.

The protein localises to the mitochondrion inner membrane. The enzyme catalyses a ubiquinone + NADH + 5 H(+)(in) = a ubiquinol + NAD(+) + 4 H(+)(out). In terms of biological role, core subunit of the mitochondrial membrane respiratory chain NADH dehydrogenase (Complex I) which catalyzes electron transfer from NADH through the respiratory chain, using ubiquinone as an electron acceptor. Part of the enzyme membrane arm which is embedded in the lipid bilayer and involved in proton translocation. This chain is NADH-ubiquinone oxidoreductase chain 4L (MT-ND4L), found in Eubalaena australis (Southern right whale).